Reading from the N-terminus, the 293-residue chain is F-box only protein 6 (293 aa).

In terms of domain architecture, F-box spans 10–57 (LDSINELPENILLELFTHVPARQLLLNCRLVCSLWRDLIDLMTLWKRK). Residues 78–259 (FYFLRSLHRN…VTNSSIVVSP (182 aa)) form the FBA domain. Position 258 is a phosphoserine (serine 258). Residues 261–271 (MTRNQASSEAQ) show a composition bias toward polar residues. A disordered region spans residues 261-285 (MTRNQASSEAQPGQKHGQEEAAQSP). Serine 284 carries the phosphoserine modification.

In terms of assembly, interacts with VCP. Part of a SCF (SKP1-cullin-F-box) protein ligase complex. Interacts with CHEK1 and CUL1.

The protein localises to the cytoplasm. It participates in protein modification; protein ubiquitination. Substrate-recognition component of some SCF (SKP1-CUL1-F-box protein)-type E3 ubiquitin ligase complexes. Involved in endoplasmic reticulum-associated degradation pathway (ERAD) for misfolded lumenal proteins by recognizing and binding sugar chains on unfolded glycoproteins that are retrotranslocated into the cytosol and promoting their ubiquitination and subsequent degradation. Able to recognize and bind denatured glycoproteins, which are modified with not only high-mannose but also complex-type oligosaccharides. Also recognizes sulfated glycans. Also involved in DNA damage response by specifically recognizing activated CHEK1 (phosphorylated on 'Ser-345'), promoting its ubiquitination and degradation. Ubiquitination of CHEK1 is required to ensure that activated CHEK1 does not accumulate as cells progress through S phase, or when replication forks encounter transient impediments during normal DNA replication. In Homo sapiens (Human), this protein is F-box only protein 6 (FBXO6).